A 69-amino-acid chain; its full sequence is MFGLGGQELILILLIILLLFGAKKLPELAKGLGRGMKEFKKAQTEIEEEFNNAIEDTPAQKKETIKDKE.

Residues 1–21 (MFGLGGQELILILLIILLLFG) form a helical membrane-spanning segment.

It belongs to the TatA/E family. In terms of assembly, forms a complex with TatC.

Its subcellular location is the cell inner membrane. In terms of biological role, part of the twin-arginine translocation (Tat) system that transports large folded proteins containing a characteristic twin-arginine motif in their signal peptide across membranes. TatA could form the protein-conducting channel of the Tat system. This Chlorobium phaeovibrioides (strain DSM 265 / 1930) (Prosthecochloris vibrioformis (strain DSM 265)) protein is Sec-independent protein translocase protein TatA.